Here is a 378-residue protein sequence, read N- to C-terminus: MNNTEYYDRLGVSKDASQDDIKKAYRKMSKKYHPDINKEAGAEQKYKDVQEAYETLSDSQKRAAYDQYGAAGAQGGFGGGAGGFGGFDGGGFGGFEDIFSSFFGGGGSRNPNAPRQGDDLQYRVNLSFEEAVFGVEKEVSYNREATCGTCLGSGAKPGTAPVTCRKCHGSGVMTIDTQTPLGMMRRQVTCDICHGSGKEIKEPCQTCHGTGHEKQAHKVSVKIPAGVETGQQIRLQGQGEAGFNGGPYGDLFVILNVLPSKQFERNGSTIYYSLDISFTQAALGDTVEIPTVHGDVELAIPAGTQTGKTFRLKGKGAPKLRGGGQGDQHVTVNIVTPTKLNDAQREALQAFAEASGEKMLHPKKKGFFDKVKDALEDI.

The J domain occupies 5–69 (EYYDRLGVSK…QKRAAYDQYG (65 aa)). A CR-type zinc finger spans residues 134–216 (GVEKEVSYNR…CHGTGHEKQA (83 aa)). Zn(2+) contacts are provided by C147, C150, C164, C167, C190, C193, C204, and C207. CXXCXGXG motif repeat units follow at residues 147 to 154 (CGTCLGSG), 164 to 171 (CRKCHGSG), 190 to 197 (CDICHGSG), and 204 to 211 (CQTCHGTG).

It belongs to the DnaJ family. Homodimer. Zn(2+) is required as a cofactor.

It is found in the cytoplasm. Its function is as follows. Participates actively in the response to hyperosmotic and heat shock by preventing the aggregation of stress-denatured proteins and by disaggregating proteins, also in an autonomous, DnaK-independent fashion. Unfolded proteins bind initially to DnaJ; upon interaction with the DnaJ-bound protein, DnaK hydrolyzes its bound ATP, resulting in the formation of a stable complex. GrpE releases ADP from DnaK; ATP binding to DnaK triggers the release of the substrate protein, thus completing the reaction cycle. Several rounds of ATP-dependent interactions between DnaJ, DnaK and GrpE are required for fully efficient folding. Also involved, together with DnaK and GrpE, in the DNA replication of plasmids through activation of initiation proteins. This is Chaperone protein DnaJ from Streptococcus pyogenes.